The following is a 244-amino-acid chain: Venom nerve growth factor (244 aa).

Residues 1–18 form the signal peptide; the sequence is MSMLCYTLIIAFLIGIWA. Residues 19-125 constitute a propeptide that is removed on maturation; it reads APKSEDNVSL…SLNRNIRAKR (107 aa). 3 disulfide bridges follow: cysteine 139–cysteine 204, cysteine 182–cysteine 232, and cysteine 192–cysteine 234. Residue asparagine 148 is glycosylated (N-linked (GlcNAc...) asparagine).

It belongs to the NGF-beta family. Homodimer; non-covalently linked. N-glycosylated. Expressed by the venom gland.

The protein localises to the secreted. Functionally, nerve growth factor is important for the development and maintenance of the sympathetic and sensory nervous systems. It stimulates division and differentiation of sympathetic and embryonic sensory neurons as well as basal forebrain cholinergic neurons in the brain. Its relevance in the snake venom is not clear. However, it has been shown to inhibit metalloproteinase-dependent proteolysis of platelet glycoprotein Ib alpha, suggesting a metalloproteinase inhibition to prevent metalloprotease autodigestion and/or protection against prey proteases. Binds a lipid between the two protein chains in the homodimer. The lipid-bound form promotes histamine relase from mouse mast cells, contrary to the lipid-free form. It promotes neurite outgrowth in rat PC12 pheochromocytoma cells. This chain is Venom nerve growth factor, found in Macrovipera lebetinus (Levantine viper).